We begin with the raw amino-acid sequence, 616 residues long: Chaperone protein HscA homolog (616 aa).

The protein belongs to the heat shock protein 70 family.

Functionally, probable chaperone. Has a low intrinsic ATPase activity which is markedly stimulated by HscB. The polypeptide is Chaperone protein HscA homolog (Vibrio cholerae serotype O1 (strain ATCC 39315 / El Tor Inaba N16961)).